We begin with the raw amino-acid sequence, 150 residues long: FAD synthase (150 aa).

ATP-binding positions include 11 to 12 (TF), 16 to 19 (HPGH), Asp96, and Tyr124.

The protein belongs to the archaeal FAD synthase family. In terms of assembly, homodimer. A divalent metal cation is required as a cofactor.

The catalysed reaction is FMN + ATP + H(+) = FAD + diphosphate. It participates in cofactor biosynthesis; FAD biosynthesis; FAD from FMN: step 1/1. Catalyzes the transfer of the AMP portion of ATP to flavin mononucleotide (FMN) to produce flavin adenine dinucleotide (FAD) coenzyme. This chain is FAD synthase, found in Methanocaldococcus fervens (strain DSM 4213 / JCM 15782 / AG86) (Methanococcus fervens).